A 227-amino-acid chain; its full sequence is Cytochrome c oxidase subunit 2 (227 aa).

Over 1 to 14 the chain is Mitochondrial intermembrane; sequence MAYPFELGFQDATS. The helical transmembrane segment at 15–45 threads the bilayer; it reads PIMEELLHFHDHTLMIVFLISSLVLYIISLM. Residues 46-59 are Mitochondrial matrix-facing; the sequence is LTTKLTHTSTMDAQ. The helical transmembrane segment at 60–87 threads the bilayer; it reads EVETIWTILPAIILILIALPSLRILYMM. Over 88–227 the chain is Mitochondrial intermembrane; sequence DEINDPSLTV…HFENWSSSML (140 aa). Residues histidine 161, cysteine 196, glutamate 198, cysteine 200, histidine 204, and methionine 207 each coordinate Cu cation. Residue glutamate 198 participates in Mg(2+) binding.

The protein belongs to the cytochrome c oxidase subunit 2 family. In terms of assembly, component of the cytochrome c oxidase (complex IV, CIV), a multisubunit enzyme composed of 14 subunits. The complex is composed of a catalytic core of 3 subunits MT-CO1, MT-CO2 and MT-CO3, encoded in the mitochondrial DNA, and 11 supernumerary subunits COX4I, COX5A, COX5B, COX6A, COX6B, COX6C, COX7A, COX7B, COX7C, COX8 and NDUFA4, which are encoded in the nuclear genome. The complex exists as a monomer or a dimer and forms supercomplexes (SCs) in the inner mitochondrial membrane with NADH-ubiquinone oxidoreductase (complex I, CI) and ubiquinol-cytochrome c oxidoreductase (cytochrome b-c1 complex, complex III, CIII), resulting in different assemblies (supercomplex SCI(1)III(2)IV(1) and megacomplex MCI(2)III(2)IV(2)). Found in a complex with TMEM177, COA6, COX18, COX20, SCO1 and SCO2. Interacts with TMEM177 in a COX20-dependent manner. Interacts with COX20. Interacts with COX16. Cu cation is required as a cofactor.

The protein resides in the mitochondrion inner membrane. It carries out the reaction 4 Fe(II)-[cytochrome c] + O2 + 8 H(+)(in) = 4 Fe(III)-[cytochrome c] + 2 H2O + 4 H(+)(out). In terms of biological role, component of the cytochrome c oxidase, the last enzyme in the mitochondrial electron transport chain which drives oxidative phosphorylation. The respiratory chain contains 3 multisubunit complexes succinate dehydrogenase (complex II, CII), ubiquinol-cytochrome c oxidoreductase (cytochrome b-c1 complex, complex III, CIII) and cytochrome c oxidase (complex IV, CIV), that cooperate to transfer electrons derived from NADH and succinate to molecular oxygen, creating an electrochemical gradient over the inner membrane that drives transmembrane transport and the ATP synthase. Cytochrome c oxidase is the component of the respiratory chain that catalyzes the reduction of oxygen to water. Electrons originating from reduced cytochrome c in the intermembrane space (IMS) are transferred via the dinuclear copper A center (CU(A)) of subunit 2 and heme A of subunit 1 to the active site in subunit 1, a binuclear center (BNC) formed by heme A3 and copper B (CU(B)). The BNC reduces molecular oxygen to 2 water molecules using 4 electrons from cytochrome c in the IMS and 4 protons from the mitochondrial matrix. This Tamias amoenus (Yellow-pine chipmunk) protein is Cytochrome c oxidase subunit 2 (MT-CO2).